We begin with the raw amino-acid sequence, 332 residues long: Nucleoid-associated protein VP2128 (332 aa).

This sequence belongs to the YejK family.

It is found in the cytoplasm. Its subcellular location is the nucleoid. The chain is Nucleoid-associated protein VP2128 from Vibrio parahaemolyticus serotype O3:K6 (strain RIMD 2210633).